The primary structure comprises 333 residues: Probable xyloglucan endotransglucosylase/hydrolase protein 27 (333 aa).

Residues 1–20 (METLSRLLVFMSLFSGLVSG) form the signal peptide. The 203-residue stretch at 21–223 (FALQNLPITS…YKYAPYIARF (203 aa)) folds into the GH16 domain. Glutamate 108 functions as the Nucleophile in the catalytic mechanism. Residue glutamate 112 is the Proton donor of the active site. Residues glutamate 112 and 125–127 (QTN) contribute to the xyloglucan site. Asparagine 131 carries an N-linked (GlcNAc...) asparagine glycan. Residues 135 to 139 (HSGRE), 202 to 203 (KW), glycine 207, and arginine 282 each bind xyloglucan. Cysteines 277 and 290 form a disulfide. Positions 311 to 333 (IPRRHRNGKHRSKRSRVDGTESI) are disordered. Positions 312 to 324 (PRRHRNGKHRSKR) are enriched in basic residues.

Belongs to the glycosyl hydrolase 16 family. XTH group 3 subfamily. Contains at least one intrachain disulfide bond essential for its enzymatic activity. In terms of tissue distribution, expressed in 7 day old seedlings, roots, hypocotyls, rosette leaves, internodes between nodes bearing axillary shoots, nodes bearing flowers, flower buds, anthers and siliques.

Its subcellular location is the secreted. The protein localises to the cell wall. It is found in the extracellular space. It localises to the apoplast. The enzyme catalyses breaks a beta-(1-&gt;4) bond in the backbone of a xyloglucan and transfers the xyloglucanyl segment on to O-4 of the non-reducing terminal glucose residue of an acceptor, which can be a xyloglucan or an oligosaccharide of xyloglucan.. Its function is as follows. Catalyzes xyloglucan endohydrolysis (XEH) and/or endotransglycosylation (XET). Cleaves and religates xyloglucan polymers, an essential constituent of the primary cell wall, and thereby participates in cell wall construction of growing tissues. Required for cell wall modification during the development of tracheary elements. This chain is Probable xyloglucan endotransglucosylase/hydrolase protein 27 (XTH27), found in Arabidopsis thaliana (Mouse-ear cress).